We begin with the raw amino-acid sequence, 1559 residues long: Bile pigment transporter 1 (1559 aa).

The Vacuolar segment spans residues 1–29 (MSSLEVVDGCPYGYRPYPDSGTNALNPCF). Residues 30–50 (ISVISAWQAVFFLLIGSYQLW) form a helical membrane-spanning segment. The Cytoplasmic portion of the chain corresponds to 51–84 (KLYKNNKVPPRFKNFPTLPSKINSRHLTHLTNVC). Residues 85–105 (FQSTLIICELALVSQSSDRVY) form a helical membrane-spanning segment. At 106–110 (PFILK) the chain is on the vacuolar side. A helical transmembrane segment spans residues 111–127 (KALYLNLLFNLGISLPT). Residues 128–139 (QYLAYFKSTFSM) are Cytoplasmic-facing. The chain crosses the membrane as a helical span at residues 140 to 160 (GNQLFYYMFQILLQLFLILQR). Topologically, residues 161 to 178 (YYHGSSNERLTVISGQTA) are vacuolar. The helical transmembrane segment at 179–199 (MILEVLLLFNSVAIFIYDLCI) threads the bilayer. Residues 200 to 283 (FEPINELSEY…WLNRNSLWRA (84 aa)) are Cytoplasmic-facing. The chain crosses the membrane as a helical span at residues 284–304 (IWKSFGRTISVAMLYETTSDL). The ABC transmembrane type-1 1 domain occupies 292-578 (ISVAMLYETT…VPSMINTIIE (287 aa)). Over 305–333 (LSVVQPQFLRIFIDGLNPETSSKYPPLNG) the chain is Vacuolar. The helical transmembrane segment at 334 to 354 (VFIALTLFVISVVSVFLTNQF) threads the bilayer. The Cytoplasmic segment spans residues 355–410 (YIGIFEAGLGIRGSLASLVYQKSLRLTLAERNEKSTGDILNLMSVDVLRIQRFFEN). The helical transmembrane segment at 411–431 (AQTIIGAPIQIIVVLTSLYWL) threads the bilayer. Over 432 to 434 (LGK) the chain is Vacuolar. A helical membrane pass occupies residues 435–455 (AVIGGLVTMAIMMPINAFLSR). Residues 456 to 518 (KVKKLSKTQM…NFRKIGIVSN (63 aa)) are Cytoplasmic-facing. A helical transmembrane segment spans residues 519 to 539 (LIYFAWNCVPLMVTCSTFGLF). Residues 540-560 (SLFSDSPLSPAIVFPSLSLFN) lie on the Vacuolar side of the membrane. The chain crosses the membrane as a helical span at residues 561 to 581 (ILNSAIYSVPSMINTIIETSV). Topologically, residues 582–972 (SMERLKSFLL…VKTKIYLAYI (391 aa)) are cytoplasmic. Positions 639–871 (LRTDEESIIG…KNNTSKLKKL (233 aa)) constitute an ABC transporter 1 domain. Ser-645 is modified (phosphoserine). Residue 672-679 (GRVGAGKS) participates in ATP binding. The disordered stretch occupies residues 877–899 (SPIDNGNESDVQTEHRSESEVDE). Ser-885 bears the Phosphoserine mark. Residue Thr-889 is modified to Phosphothreonine. Phosphoserine is present on residues Ser-893 and Ser-895. Thr-916 carries the post-translational modification Phosphothreonine. Ser-927 and Ser-931 each carry phosphoserine. A Phosphothreonine modification is found at Thr-934. A helical transmembrane segment spans residues 973 to 993 (KACGVLGVVLFFLFMILTRVF). The ABC transmembrane type-1 2 domain maps to 980–1265 (VVLFFLFMIL…IVRTTVTIET (286 aa)). Topologically, residues 994-1030 (DLAENFWLKYWSESNEKNGSNERVWMFVGVYSLIGVA) are vacuolar. Residue Asn-1011 is glycosylated (N-linked (GlcNAc...) asparagine). A helical membrane pass occupies residues 1031–1052 (SAAFNNLRSIMMLLYCSIRGSK). Over 1053-1095 (KLHESMAKSVIRSPMTFFETTPVGRIINRFSSDMDAVDSNLQY) the chain is Cytoplasmic. Residues 1096–1116 (IFSFFFKSILTYLVTVILVGY) form a helical membrane-spanning segment. Residue Asn-1117 is a topological domain, vacuolar. A helical transmembrane segment spans residues 1118–1138 (MPWFLVFNMFLVVIYIYYQTF). Topologically, residues 1139–1209 (YIVLSRELKR…STNRWLSVRL (71 aa)) are cytoplasmic. A helical membrane pass occupies residues 1210 to 1230 (QTIGATIVLATAILALATMNT). Over 1231-1235 (KRQLS) the chain is Vacuolar. Residues 1236–1256 (SGMVGLLMSYSLEVTGSLTWI) form a helical membrane-spanning segment. The Cytoplasmic segment spans residues 1257 to 1559 (VRTTVTIETN…SLCEKGGYLK (303 aa)). The ABC transporter 2 domain maps to 1302-1553 (IEFKNYSTKY…KTSIFYSLCE (252 aa)). Residue 1336–1343 (GRTGAGKS) participates in ATP binding. The span at 1420-1433 (HLEKMLHSKPRGDD) shows a compositional bias: basic and acidic residues. Positions 1420 to 1439 (HLEKMLHSKPRGDDSNEEDG) are disordered.

Belongs to the ABC transporter superfamily.

The protein localises to the vacuole membrane. Cooperates for the ATP-dependent vacuolar transport of bilirubin and glutathione conjugates. The chain is Bile pigment transporter 1 (BPT1) from Saccharomyces cerevisiae (strain ATCC 204508 / S288c) (Baker's yeast).